Here is a 560-residue protein sequence, read N- to C-terminus: Nibrin homolog (560 aa).

One can recognise an FHA domain in the interval 25–87; the sequence is YKVGRKDCDV…YGTFFNKVQG (63 aa). In terms of domain architecture, BRCT spans 115-190; that stretch reads TFRLSFVPIV…KQIVLGDWFK (76 aa). The Nuclear localization signal signature appears at 511-518; it reads YKRGTVID.

Belongs to the Nibrin family. In terms of assembly, component of the MRN complex composed of two heterodimers RAD50 and MRE11 associated with a single NBS1.

Its subcellular location is the nucleus. It is found in the chromosome. Functionally, component of the MRN complex, which plays a central role in double-strand break (DSB) repair, DNA recombination, maintenance of telomere integrity and meiosis. The MRN complex is involved in the repair of DNA double-strand breaks (DSBs) via homologous recombination (HR), an error-free mechanism which primarily occurs during S and G2 phases. The complex (1) mediates the end resection of damaged DNA, which generates proper single-stranded DNA, a key initial steps in HR, and is (2) required for the recruitment of other repair factors and efficient activation of ATM and ATR upon DNA damage. The MRN complex possesses single-strand endonuclease activity and double-strand-specific 3'-5' exonuclease activity, which are provided by MRE11, to initiate end resection, which is required for single-strand invasion and recombination. Within the MRN complex, NBS1 acts as a protein-protein adapter, which specifically recognizes and binds phosphorylated proteins, promoting their recruitment to DNA damage sites. Recruits MRE11 and RAD50 components of the MRN complex to DSBs in response to DNA damage. The polypeptide is Nibrin homolog (Oryza sativa subsp. indica (Rice)).